Here is a 324-residue protein sequence, read N- to C-terminus: Autolytic lysozyme (324 aa).

Catalysis depends on residues D5 and E91. 5 tandem repeats follow at residues 212–234 (LLKRGLEVDGIEGPETEAAIKDF), 235–254 (QSIMGLTVDGIWGTNTSGAA), 255–277 (QQIFSRPLDGVAYPHYEYATRYI), 278–300 (QYRVGASVDGTFGSGTKAKVAAW), and 301–324 (QSNQGLMADGVVGSATWSKLLDEN). Residues 212-324 (LLKRGLEVDG…ATWSKLLDEN (113 aa)) form a 5 X 23 AA tandem repeats region.

The protein belongs to the glycosyl hydrolase 25 family. Monomer.

It localises to the secreted. It is found in the cytoplasm. The catalysed reaction is Hydrolysis of (1-&gt;4)-beta-linkages between N-acetylmuramic acid and N-acetyl-D-glucosamine residues in a peptidoglycan and between N-acetyl-D-glucosamine residues in chitodextrins.. In Clostridium acetobutylicum (strain ATCC 824 / DSM 792 / JCM 1419 / IAM 19013 / LMG 5710 / NBRC 13948 / NRRL B-527 / VKM B-1787 / 2291 / W), this protein is Autolytic lysozyme (lyc).